A 254-amino-acid chain; its full sequence is Nickel import ATP-binding protein NikD (254 aa).

One can recognise an ABC transporter domain in the interval 2 to 241 (PQQIELRNIA…PKHAVTRSLV (240 aa)). Residue 36-43 (GGSGSGKS) coordinates ATP.

This sequence belongs to the ABC transporter superfamily. Nickel importer (TC 3.A.1.5.3) family. In terms of assembly, the complex is composed of two ATP-binding proteins (NikD and NikE), two transmembrane proteins (NikB and NikC) and a solute-binding protein (NikA).

Its subcellular location is the cell inner membrane. It carries out the reaction Ni(2+)(out) + ATP + H2O = Ni(2+)(in) + ADP + phosphate + H(+). Its function is as follows. Part of the ABC transporter complex NikABCDE involved in nickel import. Responsible for energy coupling to the transport system. This Escherichia coli (strain UTI89 / UPEC) protein is Nickel import ATP-binding protein NikD.